The primary structure comprises 64 residues: Lantibiotic actagardine (64 aa).

Residues 1 to 45 (MSALAIEKSWKDVDLRDGATSHPAGLGFGELTFEDLREDRTIYAA) constitute a propeptide that is removed on maturation. Positions 46–51 (SSGWVC) form a cross-link, lanthionine (Ser-Cys). 2 consecutive cross-links (beta-methyllanthionine (Thr-Cys)) follow at residues 52–57 (TLTIEC) and 54–62 (TIECGTVIC). A cross-link (beta-methyllanthionine sulfoxide (Thr-Cys)) is located at residues 59-64 (TVICAC).

It belongs to the type B lantibiotic family. In terms of processing, maturation of lantibiotics involves the enzymatic conversion of Thr, and Ser into dehydrated AA by the enzyme garM and the formation of thioether bonds with cysteine. The 59-64 beta-methyllanthionine thioether bond is oxidized to a sulfoxide by the monooxygenase GarO. This is followed by membrane translocation and cleavage of the modified precursor. Post-translationally, the sulfoxide group of the 59-64 beta-methyllanthionine thioether bond is mildly important for activity, since the antibacterial activity of deoxyactagardine is marginally lower compared with oxidized actagardine.

In terms of biological role, has potent antibacterial activity against some Gram-positive bacteria. Has good antistreptococcal activity. Inhibits cell wall biosynthesis by binding to lipid II and blocking transglycosylation. This chain is Lantibiotic actagardine, found in Actinoplanes garbadinensis.